The sequence spans 515 residues: Acetyltransferase sphE (515 aa).

Catalysis depends on proton acceptor residues H184 and D438.

Belongs to the plant acyltransferase family. Monomer.

It carries out the reaction sphingofungin B + acetyl-CoA = sphingofungin C + CoA. The protein operates within secondary metabolite biosynthesis. In terms of biological role, acetyltransferase; part of the gene cluster that mediates the biosynthesis of sphingofungins, bioactive molecules acting as sphingolipid inhibitors via inhibiting serine palmitoyl transferase (SPT). Within the pathway, sphE catalyzes the O-acetylation of the C-5 hydroxyl group of sphingofungin B to produce sphingofungin C. SphE can also convert sphingofungin B1 into sphingofungin C1 and sphingofungin B2 into sphingofungin C2. Sphingofungin biosynthesis starts with the PKS sphB that produces an C18 polyketide precursor 3-hydroxyoctadeca-4,10-dienoyl-ACP containing one delta-6 desaturation and one delta-12 desaturation. The aminoacyl transferase sphA uses the sphB product to produce 3-keto-presphingofungin by adding an aminomalonate molecule. SphF then reduces the C-3 ketone of 3-keto-presphingofungin which leads to presphingofungin. The cytochrome P450 monooxygenase sphH converts presphingofungin into sphingofungin B1 which is further converted to sphingofungin B by the dioxygenase sphC. SphC is also able to convert presphingofungin into sphingofungin B2. The acetyltransferase sphE acetylates sphingofungin B to produce sphingofungin C, but can also convert sphingofungin B1 into sphingofungin C1 and sphingofungin B2 into sphingofungin C2. Finally, sphingofungin C can be spontaneously converted into sphingofungin D. This chain is Acetyltransferase sphE, found in Aspergillus fumigatus (strain CBS 144.89 / FGSC A1163 / CEA10) (Neosartorya fumigata).